The following is a 395-amino-acid chain: MAAEATAVAGSGAVGGCLAKDGLQQSKCPDTTPKRRRASSLSRDAERRAYQWCREYLGGAWRRVQPEELRVYPVSGGLSNLLFRCSLPDHLPSVGEEPREVLLRLYGAILQGVDSLVLESVMFAILAERSLGPQLYGVFPEGRLEQYIPSRPLKTQELREPVLSAAIATKMAQFHGMEMPFTKEPHWLFGTMERYLKQIQDLPPTGLPEMNLLEMYSLKDEMGNLRKLLESTPSPVVFCHNDIQEGNILLLSEPENADSLMLVDFEYSSYNYRGFDIGNHFCEWVYDYTHEEWPFYKARPTDYPTQEQQLHFIRHYLAEAKKGETLSQEEQRKLEEDLLVEVSRYALASHFFWGLWSILQASMSTIEFGYLDYAQSRFQFYFQQKGQLTSVHSSS.

A2 carries the post-translational modification N-acetylalanine. ATP-binding positions include 75 to 81 (SGGLSNL), R104, 146 to 152 (QYIPSRP), Q244, and D264. Residue 77-79 (GLS) coordinates phosphocholine.

It belongs to the choline/ethanolamine kinase family. As to quaternary structure, homodimer, and heterodimer with CHKA.

The enzyme catalyses choline + ATP = phosphocholine + ADP + H(+). It carries out the reaction ethanolamine + ATP = phosphoethanolamine + ADP + H(+). Its pathway is phospholipid metabolism; phosphatidylethanolamine biosynthesis; phosphatidylethanolamine from ethanolamine: step 1/3. Has a key role in phospholipid metabolism, and catalyzes the first step of phosphatidylethanolamine and phosphatidylcholine biosynthesis. The sequence is that of Choline/ethanolamine kinase (CHKB) from Homo sapiens (Human).